Here is a 207-residue protein sequence, read N- to C-terminus: uncharacterized protein (207 aa).

In terms of domain architecture, YrdC-like spans 14-201 (ARLINQAVEI…SPVILREGSG (188 aa)).

It belongs to the SUA5 family.

This is an uncharacterized protein from Haemophilus influenzae (strain ATCC 51907 / DSM 11121 / KW20 / Rd).